The chain runs to 247 residues: 2,3-bisphosphoglycerate-dependent phosphoglycerate mutase (247 aa).

Substrate is bound by residues 8 to 15 (RHGESQWN), 21 to 22 (TG), Arg60, 87 to 90 (ERHY), Lys98, 114 to 115 (RR), and 183 to 184 (GN). His9 serves as the catalytic Tele-phosphohistidine intermediate. Residue Glu87 is the Proton donor/acceptor of the active site.

The protein belongs to the phosphoglycerate mutase family. BPG-dependent PGAM subfamily.

It carries out the reaction (2R)-2-phosphoglycerate = (2R)-3-phosphoglycerate. Its pathway is carbohydrate degradation; glycolysis; pyruvate from D-glyceraldehyde 3-phosphate: step 3/5. Its function is as follows. Catalyzes the interconversion of 2-phosphoglycerate and 3-phosphoglycerate. The sequence is that of 2,3-bisphosphoglycerate-dependent phosphoglycerate mutase from Chlorobaculum tepidum (strain ATCC 49652 / DSM 12025 / NBRC 103806 / TLS) (Chlorobium tepidum).